The chain runs to 722 residues: Zinc finger BED domain-containing protein RICESLEEPER 1 (722 aa).

The BED-type zinc finger occupies 66–126; sequence RKKSLVWEHF…GSCPKIKNQE (61 aa). Cys89, Cys92, His113, and Cys119 together coordinate Zn(2+). Positions 572–592 are disordered; that stretch reads VEQGGGNNAPASENSTQATAP. Over residues 580–592 the composition is skewed to polar residues; sequence APASENSTQATAP. The segment at 617–702 is HATC (Hobo-Ac-Tam3) domain; it reads ELEQYLDESL…EALVCAKDWL (86 aa).

As to quaternary structure, homodimer.

It localises to the nucleus. Functionally, transposase-like protein that is essential for plant growth and development. May regulate global gene expression by recruiting other cellular factors. The sequence is that of Zinc finger BED domain-containing protein RICESLEEPER 1 from Oryza sativa subsp. japonica (Rice).